The primary structure comprises 388 residues: Chaperone protein DnaJ (388 aa).

Residues 4–69 (DYYDILGVDE…EKRQRYDQFG (66 aa)) enclose the J domain. 3 stretches are compositionally biased toward basic and acidic residues: residues 27-50 (KAMEYHPDRNPDDPEAEQKFKEAS), 58-73 (DPEKRQRYDQFGHDGV), and 113-124 (GRSERGRGRPGS). Disordered regions lie at residues 27-86 (KAME…GRGR) and 99-125 (SDIFGGAPGGGRGRGRSERGRGRPGSD). Residues 140–225 (GTEKNLRLQK…CGGEGRVQGE (86 aa)) form a CR-type zinc finger. Zn(2+) is bound by residues Cys-153, Cys-156, Cys-173, Cys-176, Cys-199, Cys-202, Cys-213, and Cys-216. CXXCXGXG motif repeat units follow at residues 153-160 (CESCDGTG), 173-180 (CPKCDGTG), 199-206 (CPRCEGEG), and 213-220 (CDDCGGEG). A compositionally biased stretch (basic and acidic residues) spans 362 to 376 (AHDNFQPRPPEEDTQ). Positions 362–388 (AHDNFQPRPPEEDTQKSFFRRVSDVFS) are disordered.

This sequence belongs to the DnaJ family. Homodimer. Zn(2+) serves as cofactor.

It is found in the cytoplasm. In terms of biological role, participates actively in the response to hyperosmotic and heat shock by preventing the aggregation of stress-denatured proteins and by disaggregating proteins, also in an autonomous, DnaK-independent fashion. Unfolded proteins bind initially to DnaJ; upon interaction with the DnaJ-bound protein, DnaK hydrolyzes its bound ATP, resulting in the formation of a stable complex. GrpE releases ADP from DnaK; ATP binding to DnaK triggers the release of the substrate protein, thus completing the reaction cycle. Several rounds of ATP-dependent interactions between DnaJ, DnaK and GrpE are required for fully efficient folding. Also involved, together with DnaK and GrpE, in the DNA replication of plasmids through activation of initiation proteins. The protein is Chaperone protein DnaJ of Salinibacter ruber (strain DSM 13855 / M31).